Here is a 286-residue protein sequence, read N- to C-terminus: uncharacterized protein (286 aa).

Residues 1-47 (MAIPFLHKGGSDDSTHHHTHDYDHHNHDHHGHDHHSHDSSSNSSSEA) are disordered. Residues 9-26 (GGSDDSTHHHTHDYDHHN) show a composition bias toward basic and acidic residues. 93 to 100 (GPVGSGKT) lines the GTP pocket.

It belongs to the SIMIBI class G3E GTPase family. UreG subfamily.

It localises to the cytoplasm. Its subcellular location is the nucleus. Its function is as follows. Probably facilitates nickel incorporation. This is an uncharacterized protein from Schizosaccharomyces pombe (strain 972 / ATCC 24843) (Fission yeast).